We begin with the raw amino-acid sequence, 89 residues long: Small ribosomal subunit protein bS20 (89 aa).

It belongs to the bacterial ribosomal protein bS20 family.

Binds directly to 16S ribosomal RNA. The polypeptide is Small ribosomal subunit protein bS20 (Wolbachia sp. subsp. Brugia malayi (strain TRS)).